Reading from the N-terminus, the 81-residue chain is Small ribosomal subunit protein bS20 (81 aa).

It belongs to the bacterial ribosomal protein bS20 family.

In terms of biological role, binds directly to 16S ribosomal RNA. The sequence is that of Small ribosomal subunit protein bS20 from Mycoplasma capricolum subsp. capricolum (strain California kid / ATCC 27343 / NCTC 10154).